Consider the following 431-residue polypeptide: 3-phosphoshikimate 1-carboxyvinyltransferase (431 aa).

Residues K26, S27, and R31 each coordinate 3-phosphoshikimate. Residue K26 coordinates phosphoenolpyruvate. Phosphoenolpyruvate-binding residues include G99 and R127. 6 residues coordinate 3-phosphoshikimate: S170, S171, Q172, S199, E314, and H343. Q172 serves as a coordination point for phosphoenolpyruvate. Residue E314 is the Proton acceptor of the active site. Phosphoenolpyruvate is bound by residues R347, R388, and K413.

This sequence belongs to the EPSP synthase family. Monomer.

It is found in the cytoplasm. The catalysed reaction is 3-phosphoshikimate + phosphoenolpyruvate = 5-O-(1-carboxyvinyl)-3-phosphoshikimate + phosphate. It functions in the pathway metabolic intermediate biosynthesis; chorismate biosynthesis; chorismate from D-erythrose 4-phosphate and phosphoenolpyruvate: step 6/7. Functionally, catalyzes the transfer of the enolpyruvyl moiety of phosphoenolpyruvate (PEP) to the 5-hydroxyl of shikimate-3-phosphate (S3P) to produce enolpyruvyl shikimate-3-phosphate and inorganic phosphate. The protein is 3-phosphoshikimate 1-carboxyvinyltransferase of Mycobacterium ulcerans (strain Agy99).